Consider the following 536-residue polypeptide: Chaperonin GroEL (536 aa).

ATP contacts are provided by residues 30 to 33, 86 to 90, glycine 414, and aspartate 494; these read TLGP and DGTTT.

The protein belongs to the chaperonin (HSP60) family. In terms of assembly, forms a cylinder of 14 subunits composed of two heptameric rings stacked back-to-back. Interacts with the co-chaperonin GroES.

The protein localises to the cytoplasm. The enzyme catalyses ATP + H2O + a folded polypeptide = ADP + phosphate + an unfolded polypeptide.. Functionally, together with its co-chaperonin GroES, plays an essential role in assisting protein folding. The GroEL-GroES system forms a nano-cage that allows encapsulation of the non-native substrate proteins and provides a physical environment optimized to promote and accelerate protein folding. In Methanosarcina barkeri (strain Fusaro / DSM 804), this protein is Chaperonin GroEL.